Here is a 307-residue protein sequence, read N- to C-terminus: Oxygen-dependent coproporphyrinogen-III oxidase (307 aa).

Residue S97 coordinates substrate. 2 residues coordinate a divalent metal cation: H101 and H111. H111 serves as the catalytic Proton donor. Position 113–115 (113–115) interacts with substrate; the sequence is NVR. A divalent metal cation is bound by residues H152 and H182. The important for dimerization stretch occupies residues 247–282; it reads YVEFNLVWDRGTHFGLQSGGRTESILMSMPPLASWS. 265-267 serves as a coordination point for substrate; sequence GGR.

The protein belongs to the aerobic coproporphyrinogen-III oxidase family. As to quaternary structure, homodimer. A divalent metal cation is required as a cofactor.

The protein resides in the cytoplasm. The catalysed reaction is coproporphyrinogen III + O2 + 2 H(+) = protoporphyrinogen IX + 2 CO2 + 2 H2O. Its pathway is porphyrin-containing compound metabolism; protoporphyrin-IX biosynthesis; protoporphyrinogen-IX from coproporphyrinogen-III (O2 route): step 1/1. Functionally, involved in the heme biosynthesis. Catalyzes the aerobic oxidative decarboxylation of propionate groups of rings A and B of coproporphyrinogen-III to yield the vinyl groups in protoporphyrinogen-IX. This is Oxygen-dependent coproporphyrinogen-III oxidase from Polaromonas naphthalenivorans (strain CJ2).